Reading from the N-terminus, the 264-residue chain is NADH-quinone oxidoreductase subunit I 2 (264 aa).

2 4Fe-4S ferredoxin-type domains span residues Gly-57 to Glu-86 and Thr-98 to Glu-127. [4Fe-4S] cluster-binding residues include Cys-66, Cys-69, Cys-72, Cys-76, Cys-107, Cys-110, Cys-113, and Cys-117. Residues Ala-183 to Lys-264 form a disordered region. The segment covering Ala-197–Lys-264 has biased composition (low complexity).

The protein belongs to the complex I 23 kDa subunit family. As to quaternary structure, NDH-1 is composed of 14 different subunits. Subunits NuoA, H, J, K, L, M, N constitute the membrane sector of the complex. Requires [4Fe-4S] cluster as cofactor.

It is found in the cell inner membrane. It carries out the reaction a quinone + NADH + 5 H(+)(in) = a quinol + NAD(+) + 4 H(+)(out). Functionally, NDH-1 shuttles electrons from NADH, via FMN and iron-sulfur (Fe-S) centers, to quinones in the respiratory chain. The immediate electron acceptor for the enzyme in this species is believed to be ubiquinone. Couples the redox reaction to proton translocation (for every two electrons transferred, four hydrogen ions are translocated across the cytoplasmic membrane), and thus conserves the redox energy in a proton gradient. The polypeptide is NADH-quinone oxidoreductase subunit I 2 (Anaeromyxobacter dehalogenans (strain 2CP-C)).